The chain runs to 412 residues: Histone-lysine N-methyltransferase SUV39H1 (412 aa).

Residues 1–89 are interaction with SIRT1; that stretch reads MAENLKGCSV…LKCVRILKQF (89 aa). Residues 43–101 form the Chromo domain; the sequence is FEVEYLCDYKKIREQEYYLVKWRGYPDSESTWEPRQNLKCVRILKQFHKDLERELLRRH. In terms of domain architecture, Pre-SET spans 179–240; the sequence is VGCECQDCLW…DCPNRVVQKG (62 aa). Positions 181, 183, 186, 194, 195, 222, 226, 228, and 232 each coordinate Zn(2+). Residues 243–366 form the SET domain; sequence YDLCIFRTDD…AGEELTFDYN (124 aa). 254–256 is an S-adenosyl-L-methionine binding site; it reads RGW. Residues 255–377 are mediates interaction with MECOM; it reads GWGVRTLEKI…QVDPVDMEST (123 aa). Residue Lys-266 is modified to N6-acetyllysine. S-adenosyl-L-methionine is bound by residues Tyr-297 and 323 to 324; that span reads NH. Residue Cys-326 participates in Zn(2+) binding. Ser-391 is subject to Phosphoserine. Residues 396–412 form the Post-SET domain; that stretch reads VRIECKCGTESCRKYLF. Zn(2+)-binding residues include Cys-400, Cys-402, and Cys-407.

This sequence belongs to the class V-like SAM-binding methyltransferase superfamily. Histone-lysine methyltransferase family. Suvar3-9 subfamily. In terms of assembly, interacts with H3 and H4 histones. Interacts with GFI1B, DNMT3B, CBX1, CBX4, CCAR2, MBD1, RUNX1, RUNX3, MYOD1, SMAD5 and RB1. Interacts with SBF1 through the SET domain. Interacts with HDAC1 and HDAC2 through the N-terminus and associates with the core histone deacetylase complex composed of HDAC1, HDAC2, RBBP4 and RBBP7. Component of the eNoSC complex, composed of SIRT1, SUV39H1 and RRP8. Interacts (via SET domain) with MECOM; enhances MECOM transcriptional repression activity. Interacts with LMNA; the interaction increases stability of SUV39H1. The large PER complex involved in the histone methylation is composed of at least PER2, CBX3, TRIM28, SUV39H1 and/or SUV39H2; CBX3 mediates the formation of the complex. (Microbial infection) Interacts with HTLV-1 Tax protein, leading to abrogate Tax transactivation of HTLV-1 LTR. In terms of processing, phosphorylated on serine residues, and to a lesser degree, on threonine residues. The phosphorylated form is stabilized by SBF1 and is less active in its transcriptional repressor function. Ubiquitinated by the DCX(DCAF13) E3 ubiquitin ligase complex, leading to its degradation. Post-translationally, acetylated at Lys-266, leading to inhibition of enzyme activity. SIRT1-mediated deacetylation relieves this inhibition. In terms of processing, (Microbial infection) A higher molecular weight form is also seen in M.bovis infected cells.

The protein localises to the nucleus. The protein resides in the nucleus lamina. It is found in the nucleoplasm. It localises to the chromosome. Its subcellular location is the centromere. The protein localises to the cytoplasmic vesicle. The protein resides in the phagosome lumen. It is found in the cell membrane. The enzyme catalyses L-lysyl(9)-[histone H3] + 3 S-adenosyl-L-methionine = N(6),N(6),N(6)-trimethyl-L-lysyl(9)-[histone H3] + 3 S-adenosyl-L-homocysteine + 3 H(+). With respect to regulation, inhibited by S-adenosyl-L-homocysteine. Negatively regulated by CCAR2. Its function is as follows. Histone methyltransferase that specifically trimethylates 'Lys-9' of histone H3 using monomethylated H3 'Lys-9' as substrate. Also weakly methylates histone H1 (in vitro). H3 'Lys-9' trimethylation represents a specific tag for epigenetic transcriptional repression by recruiting HP1 (CBX1, CBX3 and/or CBX5) proteins to methylated histones. Mainly functions in heterochromatin regions, thereby playing a central role in the establishment of constitutive heterochromatin at pericentric and telomere regions. H3 'Lys-9' trimethylation is also required to direct DNA methylation at pericentric repeats. SUV39H1 is targeted to histone H3 via its interaction with RB1 and is involved in many processes, such as repression of MYOD1-stimulated differentiation, regulation of the control switch for exiting the cell cycle and entering differentiation, repression by the PML-RARA fusion protein, BMP-induced repression, repression of switch recombination to IgA and regulation of telomere length. Component of the eNoSC (energy-dependent nucleolar silencing) complex, a complex that mediates silencing of rDNA in response to intracellular energy status and acts by recruiting histone-modifying enzymes. The eNoSC complex is able to sense the energy status of cell: upon glucose starvation, elevation of NAD(+)/NADP(+) ratio activates SIRT1, leading to histone H3 deacetylation followed by dimethylation of H3 at 'Lys-9' (H3K9me2) by SUV39H1 and the formation of silent chromatin in the rDNA locus. Recruited by the large PER complex to the E-box elements of the circadian target genes such as PER2 itself or PER1, contributes to the conversion of local chromatin to a heterochromatin-like repressive state through H3 'Lys-9' trimethylation. Functionally, (Microbial infection) Plays a role in defense against mycobacterial infections. Methylates M.tuberculosis HupB on 'Lys-140', probably methylates HupB of M.bovis also. Methylation has an inhibitory effect on mycobacterial growth in the host. Macrophages expressing about 60% SUV39H1 are slightly more susceptible to M.bovis or M.tuberculosis infection. Chaetocin (an inhibitor of this enzyme) increases macrophage survival of M.tuberculosis. This protein inhibits biofilm formation by M.tuberculosis via 'Lys-140' trimethylation. This chain is Histone-lysine N-methyltransferase SUV39H1 (SUV39H1), found in Homo sapiens (Human).